The chain runs to 283 residues: Prolyl 4-hydroxylase 1 (283 aa).

Residues 1–6 (MAPAMK) lie on the Cytoplasmic side of the membrane. The helical; Signal-anchor for type II membrane protein transmembrane segment at 7-27 (IVFGLLTFVTVGMVIGSLLQL) threads the bilayer. Residues 28-283 (AFINRLEDSY…TKWMRQKATS (256 aa)) lie on the Lumenal side of the membrane. The region spanning 162–279 (NGELIQVLRY…KWSATKWMRQ (118 aa)) is the Fe2OG dioxygenase domain. Residues His180, Asp182, and His260 each coordinate Fe cation. Lys270 serves as a coordination point for 2-oxoglutarate.

This sequence belongs to the P4HA family. Requires Fe(2+) as cofactor. L-ascorbate is required as a cofactor.

It is found in the endoplasmic reticulum membrane. The catalysed reaction is L-prolyl-[collagen] + 2-oxoglutarate + O2 = trans-4-hydroxy-L-prolyl-[collagen] + succinate + CO2. Catalyzes the post-translational formation of 4-hydroxyproline in -Xaa-Pro-Gly- sequences in proline-rich peptide sequences of plant glycoproteins and other proteins. Hydroxylates preferentially prolines in second positions in the -Pro-Pro-Gly-triplets. Hydroxyprolines are important constituent of many plant cell wall glycoproteins such as extensins, hydroxyproline-rich glycoproteins, lectins and arabinogalactan proteins. Can hydroxylate collagen-like peptides and hypoxia-inducible transcription factor peptides. The protein is Prolyl 4-hydroxylase 1 of Arabidopsis thaliana (Mouse-ear cress).